The following is a 214-amino-acid chain: Phosphoenolpyruvate guanylyltransferase (214 aa).

Phosphoenolpyruvate-binding residues include T148, G163, and S166.

It belongs to the CofC family.

The enzyme catalyses phosphoenolpyruvate + GTP + H(+) = enolpyruvoyl-2-diphospho-5'-guanosine + diphosphate. Its pathway is cofactor biosynthesis; coenzyme F420 biosynthesis. In terms of biological role, guanylyltransferase that catalyzes the activation of phosphoenolpyruvate (PEP) as enolpyruvoyl-2-diphospho-5'-guanosine, via the condensation of PEP with GTP. It is involved in the biosynthesis of coenzyme F420, a hydride carrier cofactor. In Mycobacterium tuberculosis (strain KZN 1435 / MDR), this protein is Phosphoenolpyruvate guanylyltransferase.